Reading from the N-terminus, the 484-residue chain is Glutamate--tRNA ligase (484 aa).

The 'HIGH' region motif lies at 11–21 (PSPTGYLHIGN). The short motif at 252 to 256 (KLSKR) is the 'KMSKS' region element. An ATP-binding site is contributed by K255.

It belongs to the class-I aminoacyl-tRNA synthetase family. Glutamate--tRNA ligase type 1 subfamily. In terms of assembly, monomer.

It is found in the cytoplasm. The enzyme catalyses tRNA(Glu) + L-glutamate + ATP = L-glutamyl-tRNA(Glu) + AMP + diphosphate. Catalyzes the attachment of glutamate to tRNA(Glu) in a two-step reaction: glutamate is first activated by ATP to form Glu-AMP and then transferred to the acceptor end of tRNA(Glu). The polypeptide is Glutamate--tRNA ligase (Staphylococcus aureus (strain Newman)).